A 327-amino-acid chain; its full sequence is Ribosomal RNA small subunit methyltransferase H (327 aa).

S-adenosyl-L-methionine contacts are provided by residues 36 to 38, D55, L89, D103, and Q110; that span reads GGH. Positions 286–327 are disordered; the sequence is GAEPASDTEIEQNARAGSVRLRAAERTAAEPGRAHNPTGGVR.

It belongs to the methyltransferase superfamily. RsmH family.

It localises to the cytoplasm. The enzyme catalyses cytidine(1402) in 16S rRNA + S-adenosyl-L-methionine = N(4)-methylcytidine(1402) in 16S rRNA + S-adenosyl-L-homocysteine + H(+). Functionally, specifically methylates the N4 position of cytidine in position 1402 (C1402) of 16S rRNA. This is Ribosomal RNA small subunit methyltransferase H from Parafrankia sp. (strain EAN1pec).